The sequence spans 147 residues: Large ribosomal subunit protein uL15 (147 aa).

Residues 1–57 (MDLSNLSPAPGSTKARKRLGRGPGSGNGTTAGRGNKGHNSRSGGGVRPGFEGGQMPL) are disordered. Gly residues-rich tracts occupy residues 21 to 31 (RGPGSGNGTTA) and 42 to 52 (SGGGVRPGFEG).

This sequence belongs to the universal ribosomal protein uL15 family. As to quaternary structure, part of the 50S ribosomal subunit.

Binds to the 23S rRNA. This Desulfosudis oleivorans (strain DSM 6200 / JCM 39069 / Hxd3) (Desulfococcus oleovorans) protein is Large ribosomal subunit protein uL15.